We begin with the raw amino-acid sequence, 469 residues long: Ribulose bisphosphate carboxylase large chain (469 aa).

An N6,N6,N6-trimethyllysine modification is found at lysine 5. The substrate site is built by asparagine 114 and threonine 164. Lysine 166 serves as the catalytic Proton acceptor. Lysine 168 provides a ligand contact to substrate. Mg(2+) is bound by residues lysine 192, aspartate 194, and glutamate 195. At lysine 192 the chain carries N6-carboxylysine. Histidine 285 serves as the catalytic Proton acceptor. The substrate site is built by arginine 286, histidine 318, and serine 370.

The protein belongs to the RuBisCO large chain family. Type I subfamily. As to quaternary structure, heterohexadecamer of 8 large chains and 8 small chains; disulfide-linked. The disulfide link is formed within the large subunit homodimers. Mg(2+) serves as cofactor. Post-translationally, the disulfide bond which can form in the large chain dimeric partners within the hexadecamer appears to be associated with oxidative stress and protein turnover.

The protein resides in the plastid. Its subcellular location is the chloroplast. The catalysed reaction is 2 (2R)-3-phosphoglycerate + 2 H(+) = D-ribulose 1,5-bisphosphate + CO2 + H2O. It carries out the reaction D-ribulose 1,5-bisphosphate + O2 = 2-phosphoglycolate + (2R)-3-phosphoglycerate + 2 H(+). Functionally, ruBisCO catalyzes two reactions: the carboxylation of D-ribulose 1,5-bisphosphate, the primary event in carbon dioxide fixation, as well as the oxidative fragmentation of the pentose substrate in the photorespiration process. Both reactions occur simultaneously and in competition at the same active site. The polypeptide is Ribulose bisphosphate carboxylase large chain (Nicandra physalodes (Apple-of-Peru)).